The primary structure comprises 1182 residues: Tyrosine-protein kinase ABL2 (1182 aa).

Disordered regions lie at residues 1–47 (MGQQ…TGFN) and 60–80 (EDGF…HRPY). Glycine 2 is lipidated: N-myristoyl glycine. Residues 2-106 (GQQVGRVGEA…SKENLLGATE (105 aa)) are CAP. Residues 20-30 (RGIRGSSAARP) show a composition bias toward low complexity. Position 97 is a phosphoserine (serine 97). In terms of domain architecture, SH3 spans 107 to 167 (SDPNLFVALY…PSNYITPVNS (61 aa)). Phosphotyrosine occurs at positions 116, 161, 174, 185, 218, and 231. The 91-residue stretch at 173-263 (WYHGPVSRSA…GLVTTLHYPA (91 aa)) folds into the SH2 domain. Tyrosine 261 carries the post-translational modification Phosphotyrosine; by ABL1 and autocatalysis. The residue at position 272 (tyrosine 272) is a Phosphotyrosine; by autocatalysis. Serine 275 is subject to Phosphoserine. The 252-residue stretch at 288-539 (ITMKHKLGGG…PSFAETHQAF (252 aa)) folds into the Protein kinase domain. 294 to 302 (LGGGQYGEV) serves as a coordination point for ATP. A phosphotyrosine mark is found at tyrosine 299 and tyrosine 303. Residues lysine 317 and 362 to 368 (EYMPYGN) each bind ATP. Catalysis depends on aspartate 409, which acts as the Proton acceptor. A Kinase activation loop motif is present at residues 427–451 (DFGLSRLMTGDTYTAHAGAKFPIKW). Tyrosine 439 carries the phosphotyrosine; by autocatalysis and SRC-type Tyr-kinases modification. Tyrosine 459 bears the Phosphotyrosine mark. Residue tyrosine 568 is modified to Phosphotyrosine; by autocatalysis. Positions 611-641 (IRGAQASSGSPALPRKQRDKSPSSLLEDAKE) are disordered. Residues serine 620, serine 631, and serine 633 each carry the phosphoserine modification. Residue aspartate 647 is modified to Phosphotyrosine. The disordered stretch occupies residues 654-674 (SSFMKKRNAPTPPKRSSSFRE). Serine 655 carries the post-translational modification Phosphoserine. The Nuclear localization signal motif lies at 658–660 (KKR). A phosphotyrosine mark is found at alanine 662 and arginine 668. Phosphoserine occurs at positions 669, 670, and 671. Phosphotyrosine occurs at positions 683 and 718. Position 683 is a phosphotyrosine; by autocatalysis (tyrosine 683). Residues 694-930 (SLQHADGFSF…PVLPTTHNHK (237 aa)) form an F-actin-binding region. The disordered stretch occupies residues 763-794 (LRAGKPTASDDTSKPFPRSNSTSSMSSGLPEQ). Lysine 776 carries the post-translational modification N6-acetyllysine. Residues 780 to 791 (RSNSTSSMSSGL) show a composition bias toward polar residues. Serine 783 bears the Phosphoserine mark. A Phosphothreonine modification is found at threonine 800. Residues 807–823 (RSKLQLERTVSTSSQPE) show a composition bias toward polar residues. Positions 807-851 (RSKLQLERTVSTSSQPEENVDRANDMLPKKSEESAAPSRERPKAK) are disordered. Residues serine 817 and serine 820 each carry the phosphoserine modification. Basic and acidic residues predominate over residues 825 to 849 (NVDRANDMLPKKSEESAAPSRERPK). A phosphoserine mark is found at serine 915 and serine 936. A disordered region spans residues 964–1024 (HQVTSSGDKD…TSETQEGGKK (61 aa)). Positions 1010 to 1019 (TAGQSTSETQ) are enriched in polar residues. Positions 1020 to 1182 (EGGKKAALGA…VQEISDVVQR (163 aa)) are F-actin-binding.

The protein belongs to the protein kinase superfamily. Tyr protein kinase family. ABL subfamily. As to quaternary structure, interacts with PSMA7. Interacts with CTTN. Found in a complex with ABL1, ABL2, CRK and UNC119; leading to the inhibition of CRK phosphorylation by ABL kinases. Mg(2+) serves as cofactor. The cofactor is Mn(2+). Phosphorylated at Tyr-261 by ABL1 in response to oxidative stress. Phosphorylated by PDGFRB. Post-translationally, polyubiquitinated. Polyubiquitination of ABL2 leads to degradation. In terms of tissue distribution, widely expressed.

The protein resides in the cytoplasm. Its subcellular location is the cytoskeleton. The catalysed reaction is L-tyrosyl-[protein] + ATP = O-phospho-L-tyrosyl-[protein] + ADP + H(+). Stabilized in the inactive form by an association between the SH3 domain and the SH2-TK linker region, interactions of the N-terminal cap, and contributions from an N-terminal myristoyl group and phospholipids. Activated by autophosphorylation as well as by SRC-family kinase-mediated phosphorylation. Activated by RIN1 binding to the SH2 and SH3 domains. Inhibited by imatinib mesylate (Gleevec) which is used for the treatment of chronic myeloid leukemia (CML). Phosphatidylinositol 4,5-bisphosphate (PIP2), a highly abundant phosphoinositide known to regulate cytoskeletal and membrane proteins, inhibits the tyrosine kinase activity. In terms of biological role, non-receptor tyrosine-protein kinase that plays an ABL1-overlapping role in key processes linked to cell growth and survival such as cytoskeleton remodeling in response to extracellular stimuli, cell motility and adhesion and receptor endocytosis. Coordinates actin remodeling through tyrosine phosphorylation of proteins controlling cytoskeleton dynamics like MYH10 (involved in movement); CTTN (involved in signaling); or TUBA1 and TUBB (microtubule subunits). Binds directly F-actin and regulates actin cytoskeletal structure through its F-actin-bundling activity. Involved in the regulation of cell adhesion and motility through phosphorylation of key regulators of these processes such as CRK, CRKL, DOK1 or ARHGAP35. Adhesion-dependent phosphorylation of ARHGAP35 promotes its association with RASA1, resulting in recruitment of ARHGAP35 to the cell periphery where it inhibits RHO. Phosphorylates multiple receptor tyrosine kinases like PDGFRB and other substrates which are involved in endocytosis regulation such as RIN1. In brain, may regulate neurotransmission by phosphorylating proteins at the synapse. ABL2 also acts as a regulator of multiple pathological signaling cascades during infection. Pathogens can highjack ABL2 kinase signaling to reorganize the host actin cytoskeleton for multiple purposes, like facilitating intracellular movement and host cell exit. Finally, functions as its own regulator through autocatalytic activity as well as through phosphorylation of its inhibitor, ABI1. Positively regulates chemokine-mediated T-cell migration, polarization, and homing to lymph nodes and immune-challenged tissues, potentially via activation of NEDD9/HEF1 and RAP1. This is Tyrosine-protein kinase ABL2 (ABL2) from Homo sapiens (Human).